Consider the following 267-residue polypeptide: Translation initiation factor 2 subunit alpha (267 aa).

Residues 12–83 form the S1 motif domain; sequence GEYVIATVKE…RRKTVDVSLK (72 aa).

The protein belongs to the eIF-2-alpha family. In terms of assembly, heterotrimer composed of an alpha, a beta and a gamma chain.

In terms of biological role, eIF-2 functions in the early steps of protein synthesis by forming a ternary complex with GTP and initiator tRNA. This is Translation initiation factor 2 subunit alpha from Staphylothermus marinus (strain ATCC 43588 / DSM 3639 / JCM 9404 / F1).